Consider the following 463-residue polypeptide: MTSETRTLYSQLPAIDRLLHDSAFLSLRDRYGHTQVVDLLRRMLDDARDVIRNTQTLPDWYADWAQEAKLRLENAAQSALRPVINLTGTVLHTNLGRALQAQEAIEAVTQAMRAPVTLEYDLDGAGRGHRDRALATLLCRITGAEDACIVNNNAAAVLLMLAATASGKEVVVSRGELVEIGGAFRIPDVMRQAGCTLHEVGTTNRTHAKDYRQAVNENTGLLMKVHTSNYSIEGFTKTVEEAELVEIGRELDIPVVADLGSGSLVDLSQYGLPKEPMLQQLIAAGVSLVSFSGDKLLGGPQAGIIVGKKAMIAQLQSHPLKRALRADKMTLAALEATLRLYLHPEALAEKLPTLRLLTRSEASIREQAQRLQARLAARYGDEFALEVKPCLSQIGSGSLPVDRLPSAAMTFTPHDGRGSRLEALAARWRTLPVPVIGRIYDGRLWLDMRCLEDESRFMEMMLK.

N6-(pyridoxal phosphate)lysine is present on lysine 295.

This sequence belongs to the SelA family. In terms of assembly, homodecamer; pentamer of dimers. Binds only one seryl-tRNA(Sec) per dimer. It depends on pyridoxal 5'-phosphate as a cofactor.

The protein localises to the cytoplasm. It carries out the reaction L-seryl-tRNA(Sec) + selenophosphate + H(+) = L-selenocysteinyl-tRNA(Sec) + phosphate. It functions in the pathway aminoacyl-tRNA biosynthesis; selenocysteinyl-tRNA(Sec) biosynthesis; selenocysteinyl-tRNA(Sec) from L-seryl-tRNA(Sec) (bacterial route): step 1/1. Its function is as follows. Converts seryl-tRNA(Sec) to selenocysteinyl-tRNA(Sec) required for selenoprotein biosynthesis. This chain is L-seryl-tRNA(Sec) selenium transferase, found in Salmonella paratyphi A (strain AKU_12601).